The chain runs to 84 residues: MITAALTIYTTSWCGYCLRLKTALTANRIAYDEVDIEHNRAAAEFVGSVNGGNRTVPTVKFADGSTLTNPSADEVKAKLVKIAG.

In terms of domain architecture, Glutaredoxin spans 1-84 (MITAALTIYT…VKAKLVKIAG (84 aa)).

This Mycobacterium tuberculosis (strain CDC 1551 / Oshkosh) protein is Putative glutaredoxin MT3292.